The primary structure comprises 256 residues: NH(3)-dependent NAD(+) synthetase (256 aa).

29–36 (GISGGIDS) is a binding site for ATP. Aspartate 35 is a binding site for Mg(2+). Arginine 115 provides a ligand contact to deamido-NAD(+). Residue threonine 135 coordinates ATP. Residue glutamate 140 participates in Mg(2+) binding. Positions 148 and 155 each coordinate deamido-NAD(+). ATP-binding residues include lysine 164 and serine 186. 245-246 (HK) lines the deamido-NAD(+) pocket.

Belongs to the NAD synthetase family. In terms of assembly, homodimer.

The enzyme catalyses deamido-NAD(+) + NH4(+) + ATP = AMP + diphosphate + NAD(+) + H(+). The protein operates within cofactor biosynthesis; NAD(+) biosynthesis; NAD(+) from deamido-NAD(+) (ammonia route): step 1/1. In terms of biological role, catalyzes the ATP-dependent amidation of deamido-NAD to form NAD. Uses ammonia as a nitrogen source. This Methanosarcina mazei (strain ATCC BAA-159 / DSM 3647 / Goe1 / Go1 / JCM 11833 / OCM 88) (Methanosarcina frisia) protein is NH(3)-dependent NAD(+) synthetase.